The primary structure comprises 653 residues: 1-deoxy-D-xylulose-5-phosphate synthase (653 aa).

Thiamine diphosphate is bound by residues histidine 86 and 127 to 129 (GHS). Position 158 (aspartate 158) interacts with Mg(2+). Residues 159-160 (GA), asparagine 187, and phenylalanine 294 each bind thiamine diphosphate. Mg(2+) is bound at residue asparagine 187. The span at 309 to 324 (KLEKTTSEPPPKKEPR) shows a compositional bias: basic and acidic residues. A disordered region spans residues 309–343 (KLEKTTSEPPPKKEPRSPNAATAEPEAQPKPQPKP). Glutamate 395 provides a ligand contact to thiamine diphosphate.

This sequence belongs to the transketolase family. DXPS subfamily. Homodimer. Mg(2+) is required as a cofactor. The cofactor is thiamine diphosphate.

It carries out the reaction D-glyceraldehyde 3-phosphate + pyruvate + H(+) = 1-deoxy-D-xylulose 5-phosphate + CO2. The protein operates within metabolic intermediate biosynthesis; 1-deoxy-D-xylulose 5-phosphate biosynthesis; 1-deoxy-D-xylulose 5-phosphate from D-glyceraldehyde 3-phosphate and pyruvate: step 1/1. Its function is as follows. Catalyzes the acyloin condensation reaction between C atoms 2 and 3 of pyruvate and glyceraldehyde 3-phosphate to yield 1-deoxy-D-xylulose-5-phosphate (DXP). In Chromohalobacter salexigens (strain ATCC BAA-138 / DSM 3043 / CIP 106854 / NCIMB 13768 / 1H11), this protein is 1-deoxy-D-xylulose-5-phosphate synthase.